A 525-amino-acid polypeptide reads, in one-letter code: Glutamate--cysteine ligase (525 aa).

This sequence belongs to the glutamate--cysteine ligase type 1 family. Type 1 subfamily.

The catalysed reaction is L-cysteine + L-glutamate + ATP = gamma-L-glutamyl-L-cysteine + ADP + phosphate + H(+). Its pathway is sulfur metabolism; glutathione biosynthesis; glutathione from L-cysteine and L-glutamate: step 1/2. The polypeptide is Glutamate--cysteine ligase (Hahella chejuensis (strain KCTC 2396)).